We begin with the raw amino-acid sequence, 255 residues long: Thiazole synthase (255 aa).

The active-site Schiff-base intermediate with DXP is the Lys-96. Residues Gly-157, 183-184 (AG), and 205-206 (NS) each bind 1-deoxy-D-xylulose 5-phosphate.

The protein belongs to the ThiG family. In terms of assembly, homotetramer. Forms heterodimers with either ThiH or ThiS.

The protein resides in the cytoplasm. The enzyme catalyses [ThiS sulfur-carrier protein]-C-terminal-Gly-aminoethanethioate + 2-iminoacetate + 1-deoxy-D-xylulose 5-phosphate = [ThiS sulfur-carrier protein]-C-terminal Gly-Gly + 2-[(2R,5Z)-2-carboxy-4-methylthiazol-5(2H)-ylidene]ethyl phosphate + 2 H2O + H(+). Its pathway is cofactor biosynthesis; thiamine diphosphate biosynthesis. Catalyzes the rearrangement of 1-deoxy-D-xylulose 5-phosphate (DXP) to produce the thiazole phosphate moiety of thiamine. Sulfur is provided by the thiocarboxylate moiety of the carrier protein ThiS. In vitro, sulfur can be provided by H(2)S. This is Thiazole synthase from Exiguobacterium sibiricum (strain DSM 17290 / CCUG 55495 / CIP 109462 / JCM 13490 / 255-15).